The following is an 861-amino-acid chain: Leucine--tRNA ligase (861 aa).

Residues 42–52 (PYPSGKLHMGH) carry the 'HIGH' region motif. A 'KMSKS' region motif is present at residues 620–624 (KMSKS). Lys-623 is a binding site for ATP.

Belongs to the class-I aminoacyl-tRNA synthetase family.

The protein resides in the cytoplasm. The enzyme catalyses tRNA(Leu) + L-leucine + ATP = L-leucyl-tRNA(Leu) + AMP + diphosphate. This Hahella chejuensis (strain KCTC 2396) protein is Leucine--tRNA ligase.